The sequence spans 317 residues: Ribosomal protein L11 methyltransferase (317 aa).

S-adenosyl-L-methionine is bound by residues T158, G179, D201, and N244.

It belongs to the methyltransferase superfamily. PrmA family.

The protein localises to the cytoplasm. The enzyme catalyses L-lysyl-[protein] + 3 S-adenosyl-L-methionine = N(6),N(6),N(6)-trimethyl-L-lysyl-[protein] + 3 S-adenosyl-L-homocysteine + 3 H(+). Methylates ribosomal protein L11. The chain is Ribosomal protein L11 methyltransferase from Streptococcus equi subsp. equi (strain 4047).